Here is a 91-residue protein sequence, read N- to C-terminus: Small ribosomal subunit protein uS15 (91 aa).

This sequence belongs to the universal ribosomal protein uS15 family. Part of the 30S ribosomal subunit. Forms a bridge to the 50S subunit in the 70S ribosome, contacting the 23S rRNA.

Functionally, one of the primary rRNA binding proteins, it binds directly to 16S rRNA where it helps nucleate assembly of the platform of the 30S subunit by binding and bridging several RNA helices of the 16S rRNA. In terms of biological role, forms an intersubunit bridge (bridge B4) with the 23S rRNA of the 50S subunit in the ribosome. In Sulfurimonas denitrificans (strain ATCC 33889 / DSM 1251) (Thiomicrospira denitrificans (strain ATCC 33889 / DSM 1251)), this protein is Small ribosomal subunit protein uS15.